A 181-amino-acid polypeptide reads, in one-letter code: MSSLSVYHVSSPDMPNKVLTHLEDIASTLAEHGVAFDRWEAATPITPGASQEEVISAYRTQIDTLMTERGYVTVDVISLNSDHPQKAELRARFLEEHRHGEDEVRFFVAGRGLFTLHIDDYVYAVLCEKNDLISVPAGTRHWFDMGENPHFVAIRLFNNPEGWVANFTGEDIAGRFPRLED.

Residues H97, H99, E103, and H141 each coordinate Fe(2+). Ni(2+)-binding residues include H97, H99, E103, and H141.

The protein belongs to the acireductone dioxygenase (ARD) family. As to quaternary structure, monomer. Fe(2+) serves as cofactor. The cofactor is Ni(2+).

The enzyme catalyses 1,2-dihydroxy-5-(methylsulfanyl)pent-1-en-3-one + O2 = 3-(methylsulfanyl)propanoate + CO + formate + 2 H(+). It carries out the reaction 1,2-dihydroxy-5-(methylsulfanyl)pent-1-en-3-one + O2 = 4-methylsulfanyl-2-oxobutanoate + formate + 2 H(+). Its pathway is amino-acid biosynthesis; L-methionine biosynthesis via salvage pathway; L-methionine from S-methyl-5-thio-alpha-D-ribose 1-phosphate: step 5/6. Catalyzes 2 different reactions between oxygen and the acireductone 1,2-dihydroxy-3-keto-5-methylthiopentene (DHK-MTPene) depending upon the metal bound in the active site. Fe-containing acireductone dioxygenase (Fe-ARD) produces formate and 2-keto-4-methylthiobutyrate (KMTB), the alpha-ketoacid precursor of methionine in the methionine recycle pathway. Ni-containing acireductone dioxygenase (Ni-ARD) produces methylthiopropionate, carbon monoxide and formate, and does not lie on the methionine recycle pathway. This is Acireductone dioxygenase from Pseudomonas syringae pv. syringae (strain B728a).